A 55-amino-acid polypeptide reads, in one-letter code: Putative virulence-regulating protein PA2146 (55 aa).

The segment at 1–55 (MAQHQGGKGNFAEDPKRASEAGKKGGQASGGNFKNDPQRASEAGKKGGQRSHGGN) is disordered. Composition is skewed to basic and acidic residues over residues 11 to 23 (FAED…EAGK) and 36 to 45 (DPQRASEAGK).

The protein belongs to the con-10 family.

May be involved in the regulation of the production of pyocyanine, one of the major virulence factors secreted by P.aeruginosa, and other virulence factors. This is Putative virulence-regulating protein PA2146 from Pseudomonas aeruginosa (strain ATCC 15692 / DSM 22644 / CIP 104116 / JCM 14847 / LMG 12228 / 1C / PRS 101 / PAO1).